Here is a 608-residue protein sequence, read N- to C-terminus: MCGIVGILGRGPVVDKLVASLRRLEYRGYDSAGLATLEGVRIERRRAEGKLRNLEEQLRYCPPSGHAGIGHTRWATHGKPTESNAHPHATENVAVVHNGIIENFRELRAELERNGAGFNSETDTEVVAHLVDSYLKNGYSPQDAVQASLPRLRGAFALAFLFKANDDLLIGACKGSPLAIGHGRGEVYLGSDAIALAPLTDTVTYLEDGDWAVLTRATCVIYGADGSIVQRETSKSGVSALLVDKANYRHFMAKEIHEQPTVAGKTLAHYLDVAAKRVALPLALPFDFNCIQRISITACGTASYAGHIAKYWFERLARLPCDVDVASEFRYREAPLRRGDLAIVISQSGETADTLAALRYAKGKGLHTISVVNVPTSTIARESESVLPTLAGPEIGVASTKAFICQLMVLGVLAVRAAKERGKLSEIDESQLVRELIEVPRLIAAALLVEPQIEKLARYIAGARTVLYLGRGTSAPLALEGALKLKEISYIHSEGYAAGELKHGPIALIDEAVPVVVIAPYDEVFEKTVSNMQEVAARGGKIILITDAKGASEAMVDTLLTIVLPAMVASFTPLVYAIPVQLLAYHTAVARGADVDQPRNLAKSVTVE.

Catalysis depends on cysteine 2, which acts as the Nucleophile; for GATase activity. The 216-residue stretch at 2–217 (CGIVGILGRG…DGDWAVLTRA (216 aa)) folds into the Glutamine amidotransferase type-2 domain. SIS domains are found at residues 284–423 (LPFD…ERGK) and 456–598 (LARY…VDQP). Lysine 603 acts as the For Fru-6P isomerization activity in catalysis.

It localises to the cytoplasm. It carries out the reaction D-fructose 6-phosphate + L-glutamine = D-glucosamine 6-phosphate + L-glutamate. Involved in the production of the root hair deformation (HAD) factor specifically on soybean. The chain is Glutamine--fructose-6-phosphate aminotransferase [isomerizing] (nodM) from Bradyrhizobium diazoefficiens (strain JCM 10833 / BCRC 13528 / IAM 13628 / NBRC 14792 / USDA 110).